Here is a 228-residue protein sequence, read N- to C-terminus: Phosphoglycolate phosphatase (228 aa).

The active-site Nucleophile is the D12. The Mg(2+) site is built by D12, D14, and D177.

It belongs to the HAD-like hydrolase superfamily. CbbY/CbbZ/Gph/YieH family. The cofactor is Mg(2+).

The enzyme catalyses 2-phosphoglycolate + H2O = glycolate + phosphate. It participates in organic acid metabolism; glycolate biosynthesis; glycolate from 2-phosphoglycolate: step 1/1. Functionally, specifically catalyzes the dephosphorylation of 2-phosphoglycolate. Is involved in the dissimilation of the intracellular 2-phosphoglycolate formed during the DNA repair of 3'-phosphoglycolate ends, a major class of DNA lesions induced by oxidative stress. The chain is Phosphoglycolate phosphatase from Vibrio vulnificus (strain CMCP6).